Consider the following 342-residue polypeptide: MCSTMSAPTCLAHLPPCFLLLALVLVPSDASGQSSRNDWQVLQPEGPMLVAEGETLLLRCMVVGSCTDGMIKWVKVSTQDQQEIYNFKRGSFPGVMPMIQRTSEPLNCDYSIYIHNVTREHTGTYHCVRFDGLSEHSEMKSDEGTSVLVKGAGDPEPDLWIIQPQELVLGTTGDTVFLNCTVLGDGPPGPIRWFQGAGLSREAIYNFGGISHPKETAVQASNNDFSILLQNVSSEDAGTYYCVKFQRKPNRQYLSGQGTSLKVKAKSTSSKEAEFTSEPATEMSPTGLLVVFAPVVLGLKAITLAALLLALATSRRSPGQEDVKTTGPAGAMNTLAWSKGQE.

Positions 1 to 32 are cleaved as a signal peptide; sequence MCSTMSAPTCLAHLPPCFLLLALVLVPSDASG. 2 Ig-like V-type domains span residues 33-143 and 157-258; these read QSSR…KSDE and PDLW…SGQG. Residues 33–287 are Extracellular-facing; that stretch reads QSSRNDWQVL…EPATEMSPTG (255 aa). Cys60 and Cys127 are disulfide-bonded. Residues Asn116, Asn179, and Asn231 are each glycosylated (N-linked (GlcNAc...) asparagine). A disulfide bond links Cys180 and Cys242. The helical transmembrane segment at 288-308 threads the bilayer; that stretch reads LLVVFAPVVLGLKAITLAALL. The Cytoplasmic portion of the chain corresponds to 309–342; it reads LALATSRRSPGQEDVKTTGPAGAMNTLAWSKGQE. Residues 317–342 form a disordered region; it reads SPGQEDVKTTGPAGAMNTLAWSKGQE.

The protein resides in the membrane. The chain is Signal-regulatory protein beta-2 (SIRPB2) from Homo sapiens (Human).